The sequence spans 340 residues: Predicted GPI-anchored protein 46 (340 aa).

A signal peptide spans 1–29 (MKILLIYSMTPKLVIWFTLFVLCLQMGDT). Positions 99–115 (SETTTTTTQESETSIAT) are enriched in low complexity. Disordered regions lie at residues 99–154 (SETT…SLSS) and 181–212 (MSSS…IKNY). Asparagine 127 carries N-linked (GlcNAc...) asparagine glycosylation. The segment covering 182–191 (SSSSSSSSGS) has biased composition (low complexity). Residues 192 to 202 (LRDKSKLKQEN) are compositionally biased toward basic and acidic residues. A glycan (N-linked (GlcNAc...) asparagine) is linked at asparagine 270. Asparagine 314 carries GPI-anchor amidated asparagine lipidation. Residues 315-340 (SAPLLWIKISKPTVCLVIALTFLLLG) constitute a propeptide, removed in mature form.

The protein resides in the cell membrane. It is found in the secreted. The sequence is that of Predicted GPI-anchored protein 46 (PGA46) from Candida albicans (strain SC5314 / ATCC MYA-2876) (Yeast).